Reading from the N-terminus, the 131-residue chain is Small ribosomal subunit protein uS11 (131 aa).

The protein belongs to the universal ribosomal protein uS11 family. In terms of assembly, part of the 30S ribosomal subunit. Interacts with proteins S7 and S18. Binds to IF-3.

Functionally, located on the platform of the 30S subunit, it bridges several disparate RNA helices of the 16S rRNA. Forms part of the Shine-Dalgarno cleft in the 70S ribosome. The polypeptide is Small ribosomal subunit protein uS11 (Deinococcus deserti (strain DSM 17065 / CIP 109153 / LMG 22923 / VCD115)).